A 204-amino-acid polypeptide reads, in one-letter code: Pro-hevein (204 aa).

The first 17 residues, 1 to 17 (MNIFIVVLLCLTGVAIA), serve as a signal peptide directing secretion. Residues 18 to 60 (EQCGRQAGGKLCPNNLCCSQWGWCGSTDEYCSPDHNCQSNCKD) form the Chitin-binding type-1 domain. 4 disulfides stabilise this stretch: Cys20-Cys35, Cys29-Cys41, Cys34-Cys48, and Cys54-Cys58. The propeptide occupies 61–66 (SGEGVG). The 122-residue stretch at 68-189 (GSASNVLATY…VNYQFVDCGD (122 aa)) folds into the Barwin domain. 3 disulfides stabilise this stretch: Cys96/Cys128, Cys117/Cys151, and Cys131/Cys187.

Proteolytically processed to yield the two chains of the mature protein. In terms of tissue distribution, laticifer.

Functionally, N-acetyl-D-glucosamine / N-acetyl-D-neuraminic acid binding lectin. Can inhibit fungal growth. In Hevea brasiliensis (Para rubber tree), this protein is Pro-hevein (HEV1).